The sequence spans 83 residues: ATP synthase subunit c, chloroplastic (83 aa).

A run of 2 helical transmembrane segments spans residues Pro3–Gly23 and Phe57–Ala77.

This sequence belongs to the ATPase C chain family. In terms of assembly, F-type ATPases have 2 components, F(1) - the catalytic core - and F(0) - the membrane proton channel. F(1) has five subunits: alpha(3), beta(3), gamma(1), delta(1), epsilon(1). F(0) has four main subunits: a(1), b(1), b'(1) and c(10-14). The alpha and beta chains form an alternating ring which encloses part of the gamma chain. F(1) is attached to F(0) by a central stalk formed by the gamma and epsilon chains, while a peripheral stalk is formed by the delta, b and b' chains.

It is found in the plastid. The protein localises to the chloroplast thylakoid membrane. In terms of biological role, f(1)F(0) ATP synthase produces ATP from ADP in the presence of a proton or sodium gradient. F-type ATPases consist of two structural domains, F(1) containing the extramembraneous catalytic core and F(0) containing the membrane proton channel, linked together by a central stalk and a peripheral stalk. During catalysis, ATP synthesis in the catalytic domain of F(1) is coupled via a rotary mechanism of the central stalk subunits to proton translocation. Functionally, key component of the F(0) channel; it plays a direct role in translocation across the membrane. A homomeric c-ring of between 10-14 subunits forms the central stalk rotor element with the F(1) delta and epsilon subunits. The polypeptide is ATP synthase subunit c, chloroplastic (Oedogonium cardiacum (Filamentous green alga)).